Consider the following 186-residue polypeptide: Elongation factor P (186 aa).

It belongs to the elongation factor P family.

The protein localises to the cytoplasm. The protein operates within protein biosynthesis; polypeptide chain elongation. Its function is as follows. Involved in peptide bond synthesis. Stimulates efficient translation and peptide-bond synthesis on native or reconstituted 70S ribosomes in vitro. Probably functions indirectly by altering the affinity of the ribosome for aminoacyl-tRNA, thus increasing their reactivity as acceptors for peptidyl transferase. The protein is Elongation factor P of Brucella ovis (strain ATCC 25840 / 63/290 / NCTC 10512).